The sequence spans 55 residues: Large ribosomal subunit protein bL33 (55 aa).

Belongs to the bacterial ribosomal protein bL33 family.

This Jannaschia sp. (strain CCS1) protein is Large ribosomal subunit protein bL33.